A 208-amino-acid polypeptide reads, in one-letter code: Large ribosomal subunit protein uL4 (208 aa).

Residues 44-85 form a disordered region; it reads RQGTKKTKTRAEVRGGGKKPWRQKGTGRARQGSIRAPHWRGG. Positions 59 to 70 are enriched in basic residues; the sequence is GGKKPWRQKGTG.

This sequence belongs to the universal ribosomal protein uL4 family. Part of the 50S ribosomal subunit.

Functionally, one of the primary rRNA binding proteins, this protein initially binds near the 5'-end of the 23S rRNA. It is important during the early stages of 50S assembly. It makes multiple contacts with different domains of the 23S rRNA in the assembled 50S subunit and ribosome. Its function is as follows. Forms part of the polypeptide exit tunnel. The protein is Large ribosomal subunit protein uL4 of Mesoplasma florum (strain ATCC 33453 / NBRC 100688 / NCTC 11704 / L1) (Acholeplasma florum).